The primary structure comprises 272 residues: Zinc finger protein 32 (272 aa).

A compositionally biased stretch (basic and acidic residues) spans 50–65 (RREKLEQKSPESKALQ). The disordered stretch occupies residues 50–69 (RREKLEQKSPESKALQEDSP). C2H2-type zinc fingers lie at residues 76 to 98 (YDCQ…ERIH), 104 to 126 (FECT…QRIH), and 132 to 154 (YQCK…ERLH). 20 residues coordinate Zn(2+): Cys-78, Cys-81, His-94, His-98, Cys-106, Cys-109, His-122, His-126, Ser-140, Gln-143, Gly-156, Tyr-160, Phe-197, Lys-200, Leu-213, Ala-217, Cys-246, Cys-249, His-262, and Cys-266. 2 consecutive C2H2-type zinc fingers follow at residues 160-182 (YECA…RRVH) and 188-210 (YRCD…IRVH). The C2H2-type 6 zinc finger occupies 216-238 (YACSHCRKSFHTRGNCLLHGKVH). The segment at 244–266 (YLCGQCGKSFTQRGSLAVHQRSC) adopts a CCHC-type zinc-finger fold.

It belongs to the krueppel C2H2-type zinc-finger protein family.

Its subcellular location is the nucleus. Functionally, may be involved in transcriptional regulation. This is Zinc finger protein 32 (Znf32) from Mus musculus (Mouse).